The chain runs to 333 residues: 4-hydroxyproline epimerase (333 aa).

The active-site Proton acceptor is the C90. Substrate is bound by residues 91–92 (GH) and D249. Residue C253 is the Proton donor of the active site. Substrate is bound at residue 254–255 (GT).

The protein belongs to the proline racemase family. As to quaternary structure, homodimer.

It carries out the reaction trans-4-hydroxy-L-proline = cis-4-hydroxy-D-proline. Inhibited by iodoacetate, iodoacetamide and by high amounts (10 mM) of pyrrole-2-carboxylic acid (PYC). Not inhibited by PYC at 1 mM. Allows intracellular utilization of 4-hydroxyproline, one of the major constituents of host collagen, by converting 4-hydroxy-L-proline to 4-hydroxy-D-proline, which can be further metabolized by intracellular 4-hydroxy-D-proline oxidases. Strong B-cell mitogen. Plays an important role in the regulation of intra- and extracellular amino acid pools, allowing the bacterium to profit from host precursors and enzymatic pathways. This Brucella melitensis biotype 1 (strain ATCC 23456 / CCUG 17765 / NCTC 10094 / 16M) protein is 4-hydroxyproline epimerase.